The primary structure comprises 609 residues: Altered inheritance of mitochondria protein 9, mitochondrial (609 aa).

Residues 1–24 (MSIIQARCIGNLTRRSIVNVMSRR) constitute a mitochondrion transit peptide.

The protein belongs to the AIM9 family.

It is found in the mitochondrion. This Meyerozyma guilliermondii (strain ATCC 6260 / CBS 566 / DSM 6381 / JCM 1539 / NBRC 10279 / NRRL Y-324) (Yeast) protein is Altered inheritance of mitochondria protein 9, mitochondrial (AIM9).